A 140-amino-acid polypeptide reads, in one-letter code: 3-hydroxyacyl-[acyl-carrier-protein] dehydratase FabZ (140 aa).

Histidine 48 is a catalytic residue.

The protein belongs to the thioester dehydratase family. FabZ subfamily.

It localises to the cytoplasm. It carries out the reaction a (3R)-hydroxyacyl-[ACP] = a (2E)-enoyl-[ACP] + H2O. Its function is as follows. Involved in unsaturated fatty acids biosynthesis. Catalyzes the dehydration of short chain beta-hydroxyacyl-ACPs and long chain saturated and unsaturated beta-hydroxyacyl-ACPs. The protein is 3-hydroxyacyl-[acyl-carrier-protein] dehydratase FabZ of Halalkalibacterium halodurans (strain ATCC BAA-125 / DSM 18197 / FERM 7344 / JCM 9153 / C-125) (Bacillus halodurans).